Consider the following 760-residue polypeptide: E4 SUMO-protein ligase PIAL2 (760 aa).

An interacting domain (IND), required for interaction with MOM1 and PIAL1 region spans residues 143 to 301 (IKSPGSTFSQ…GVIEASPDSD (159 aa)). The SP-RING-type zinc-finger motif lies at 298 to 379 (PDSDIIEGPS…MAKILKDVEH (82 aa)). Residues Cys-329, His-331, Cys-352, and Cys-355 each contribute to the Zn(2+) site. Residues 440 to 450 (GDNKVEDRKPC) are compositionally biased toward basic and acidic residues. Disordered regions lie at residues 440 to 471 (GDNK…SNDD), 492 to 522 (LGNT…MSID), 631 to 657 (GVRG…SVSR), and 699 to 760 (SQQS…GPTS). Composition is skewed to polar residues over residues 492–518 (LGNT…SQIP), 631–653 (GVRG…PTVQ), and 699–729 (SQQS…SPFT).

Belongs to the PIAL protein ligase family. In terms of assembly, homodimer. Interacts with MOM1 and PIAL1 to form a high molecular mass complex which mediates transcriptional silencing at heterochromatin regions. In terms of tissue distribution, expressed in leaves, stems and flowers, and, at low levels, in siliques and old leaves.

The protein resides in the nucleus. The protein operates within protein modification; protein sumoylation. Together with MOM1 and PIAL1, regulates transcriptional gene silencing (TGS) independently of changes in DNA methylation. E4-type SUMO ligase that promotes SUMO chain formation in a SCE1-dependent manner and thus contributes to a pathway for proteolytic removal of sumoylation substrates. Involved in stress responses and sulfur metabolism. The sequence is that of E4 SUMO-protein ligase PIAL2 from Arabidopsis thaliana (Mouse-ear cress).